The primary structure comprises 111 residues: MATKAIPKEQWEKYFDNLSKNLPAVEVQLEVVDKEIGDQVEVEYSPLLGLSYDPKDDVFEIQFRETHDHLIYHPKEIYVEEEDGKITTIEVVDKEGTRYILRIKPAIPLPE.

This is an uncharacterized protein from Aquifex aeolicus (strain VF5).